A 256-amino-acid polypeptide reads, in one-letter code: uncharacterized protein (256 aa).

Positions 1–24 (MIKRVNKLVLGISLLFLVISIAAG) are cleaved as a signal peptide. Residue Cys-25 is the site of N-palmitoyl cysteine attachment. Cys-25 carries S-diacylglycerol cysteine lipidation.

Belongs to the staphylococcal tandem lipoprotein family.

Its subcellular location is the cell membrane. This is an uncharacterized protein from Staphylococcus aureus.